A 176-amino-acid polypeptide reads, in one-letter code: ATP-dependent protease subunit HslV (176 aa).

Thr2 is an active-site residue. Residues Gly157, Cys160, and Thr163 each contribute to the Na(+) site.

It belongs to the peptidase T1B family. HslV subfamily. As to quaternary structure, a double ring-shaped homohexamer of HslV is capped on each side by a ring-shaped HslU homohexamer. The assembly of the HslU/HslV complex is dependent on binding of ATP.

It is found in the cytoplasm. The catalysed reaction is ATP-dependent cleavage of peptide bonds with broad specificity.. Allosterically activated by HslU binding. Protease subunit of a proteasome-like degradation complex believed to be a general protein degrading machinery. This is ATP-dependent protease subunit HslV from Pectobacterium carotovorum subsp. carotovorum (strain PC1).